Reading from the N-terminus, the 104-residue chain is SOSS complex subunit C (104 aa).

Position 2 is an N-acetylalanine (A2). Phosphoserine is present on S50.

Belongs to the SOSS-C family. As to quaternary structure, component of the SOSS complex, composed of SOSS-B (SOSS-B1/NABP2 or SOSS-B2/NABP1), SOSS-A/INTS3 and SOSS-C/INIP. SOSS complexes containing SOSS-B1/NABP2 are more abundant than complexes containing SOSS-B2/NABP1. Interacts with INTS3; the interaction is direct.

The protein resides in the nucleus. Component of the SOSS complex, a multiprotein complex that functions downstream of the MRN complex to promote DNA repair and G2/M checkpoint. The SOSS complex associates with single-stranded DNA at DNA lesions and influences diverse endpoints in the cellular DNA damage response including cell-cycle checkpoint activation, recombinational repair and maintenance of genomic stability. Required for efficient homologous recombination-dependent repair of double-strand breaks (DSBs) and ATM-dependent signaling pathways. The protein is SOSS complex subunit C (INIP) of Homo sapiens (Human).